A 389-amino-acid polypeptide reads, in one-letter code: MPLPTTQLRLAMVAGEPSGDLLAASLLGGLRERLPAPTHYYGIGGARMIAQGFDSHWQMDKLTVRGYVEALGQIPEILRIRGELKRQLLAERPDAFIGVDAPDFNFNVEQAARDAGIPSIHFVCPSIWAWRGGRIKKIAKSVDHMLCLFPFEPAILDKAGVASTYVGHPLADEIPLEPDTHGARIALGLPADGPVIAVLPGSRRSEIALIGPTFFAAMALMQQREPGLRFVMPAATPALRELLQPLVDAHPQLALTITDGRSQVAMTAADAILVKSGTVTLEAALLKKPMVISYKVPWLTGQIMRRQGYLPYVGLPNILAGRFVVPELLQHFATPEALADATLTQLRDDANRRTLTEVFTEMHLSLRQNTAAKAAEAVARVLDQRKRRA.

It belongs to the LpxB family.

The enzyme catalyses a lipid X + a UDP-2-N,3-O-bis[(3R)-3-hydroxyacyl]-alpha-D-glucosamine = a lipid A disaccharide + UDP + H(+). It functions in the pathway bacterial outer membrane biogenesis; LPS lipid A biosynthesis. Functionally, condensation of UDP-2,3-diacylglucosamine and 2,3-diacylglucosamine-1-phosphate to form lipid A disaccharide, a precursor of lipid A, a phosphorylated glycolipid that anchors the lipopolysaccharide to the outer membrane of the cell. The protein is Lipid-A-disaccharide synthase of Burkholderia multivorans (strain ATCC 17616 / 249).